The following is an 858-amino-acid chain: Adenylate cyclase, germination specific (858 aa).

Over 1–18 (MKKTFVKILSKSYVEGYP) the chain is Cytoplasmic. A helical; Signal-anchor for type II membrane protein membrane pass occupies residues 19 to 41 (VGFFIGLIILAIFGSMVCIFSFM). The Extracellular segment spans residues 42-858 (HYSEEENSNI…DENVESKKNK (817 aa)). The 232-residue stretch at 86 to 317 (VNPNFDRNDF…DCVLKLWIFT (232 aa)) folds into the CHASE domain. The Guanylate cyclase domain occupies 396-526 (CVFFLDIAGF…DTVNVASRME (131 aa)). Residues aspartate 401, isoleucine 402, and aspartate 445 each contribute to the Mg(2+) site. Disordered stretches follow at residues 650–691 (YYYH…YHDT), 767–803 (SDNVNNYENNNNFSDKIENNDGDNNNINDNNYKSTNE), and 827–858 (ENCDNNDDNNNNNNNNNNNNNNDENVESKKNK). Low complexity-rich tracts occupy residues 767–778 (SDNVNNYENNNN), 788–797 (GDNNNINDNN), and 834–849 (DNNNNNNNNNNNNNND).

The protein belongs to the adenylyl cyclase class-4/guanylyl cyclase family.

The protein resides in the membrane. It carries out the reaction ATP = 3',5'-cyclic AMP + diphosphate. With respect to regulation, insensitive to guanine nucleotides. Has a large extracellular domain which may be involved in the recognition of an extracellular signal present during germination, leading to activation or inhibition of cAMP synthesis by the cytoplasmic domain. This Dictyostelium discoideum (Social amoeba) protein is Adenylate cyclase, germination specific (acgA).